The chain runs to 271 residues: Tryptophan synthase alpha chain (271 aa).

Residues Glu49 and Asp60 each act as proton acceptor in the active site.

Belongs to the TrpA family. As to quaternary structure, tetramer of two alpha and two beta chains.

The catalysed reaction is (1S,2R)-1-C-(indol-3-yl)glycerol 3-phosphate + L-serine = D-glyceraldehyde 3-phosphate + L-tryptophan + H2O. Its pathway is amino-acid biosynthesis; L-tryptophan biosynthesis; L-tryptophan from chorismate: step 5/5. In terms of biological role, the alpha subunit is responsible for the aldol cleavage of indoleglycerol phosphate to indole and glyceraldehyde 3-phosphate. In Azoarcus sp. (strain BH72), this protein is Tryptophan synthase alpha chain.